A 352-amino-acid chain; its full sequence is Galactokinase (352 aa).

14–17 is a binding site for substrate; that stretch reads EHTD. Residues Ser-46 and 96 to 102 each bind ATP; that span reads GAGLSSS. Residues Ser-102 and Glu-134 each contribute to the Mg(2+) site. Asp-146 serves as the catalytic Proton acceptor. Tyr-196 is a binding site for substrate.

This sequence belongs to the GHMP kinase family. GalK subfamily.

Its subcellular location is the cytoplasm. The catalysed reaction is alpha-D-galactose + ATP = alpha-D-galactose 1-phosphate + ADP + H(+). It functions in the pathway carbohydrate metabolism; galactose metabolism. Its function is as follows. Catalyzes the transfer of the gamma-phosphate of ATP to D-galactose to form alpha-D-galactose-1-phosphate (Gal-1-P). In Thermosipho africanus (strain TCF52B), this protein is Galactokinase.